Here is a 226-residue protein sequence, read N- to C-terminus: ATP-dependent dethiobiotin synthetase BioD (226 aa).

12–17 (GVGKTV) is a binding site for ATP. Thr16 contacts Mg(2+). Lys37 is an active-site residue. Thr41 serves as a coordination point for substrate. ATP-binding positions include Asp49, 108–111 (EGAG), and 197–199 (PAG). Residues Asp49 and Glu108 each contribute to the Mg(2+) site.

It belongs to the dethiobiotin synthetase family. As to quaternary structure, homodimer. Requires Mg(2+) as cofactor.

The protein localises to the cytoplasm. It catalyses the reaction (7R,8S)-7,8-diammoniononanoate + CO2 + ATP = (4R,5S)-dethiobiotin + ADP + phosphate + 3 H(+). Its pathway is cofactor biosynthesis; biotin biosynthesis; biotin from 7,8-diaminononanoate: step 1/2. In terms of biological role, catalyzes a mechanistically unusual reaction, the ATP-dependent insertion of CO2 between the N7 and N8 nitrogen atoms of 7,8-diaminopelargonic acid (DAPA, also called 7,8-diammoniononanoate) to form a ureido ring. The sequence is that of ATP-dependent dethiobiotin synthetase BioD from Mycobacterium avium (strain 104).